We begin with the raw amino-acid sequence, 132 residues long: MFAVIKTGGRQYRVVPDDVLEIGKIAGDVGTIIQLGEVLMLGGDTPVLGLPTVAGATVAAEVLQHKRGPKVISFKKRRRKNSKRKRGYRDEITVLRITEILADGKAPSIGPRPPREKKPVVETSAEADDAAA.

The segment at 104–132 is disordered; the sequence is GKAPSIGPRPPREKKPVVETSAEADDAAA.

This sequence belongs to the bacterial ribosomal protein bL21 family. In terms of assembly, part of the 50S ribosomal subunit. Contacts protein L20.

Functionally, this protein binds to 23S rRNA in the presence of protein L20. In Rhodopseudomonas palustris (strain BisB18), this protein is Large ribosomal subunit protein bL21.